A 426-amino-acid chain; its full sequence is D-tagatose-1,6-bisphosphate aldolase subunit KbaZ (426 aa).

This sequence belongs to the GatZ/KbaZ family. KbaZ subfamily. As to quaternary structure, forms a complex with KbaY.

It functions in the pathway carbohydrate metabolism; D-tagatose 6-phosphate degradation; D-glyceraldehyde 3-phosphate and glycerone phosphate from D-tagatose 6-phosphate: step 2/2. Component of the tagatose-1,6-bisphosphate aldolase KbaYZ that is required for full activity and stability of the Y subunit. Could have a chaperone-like function for the proper and stable folding of KbaY. When expressed alone, KbaZ does not show any aldolase activity. The sequence is that of D-tagatose-1,6-bisphosphate aldolase subunit KbaZ from Escherichia coli (strain K12 / MC4100 / BW2952).